The chain runs to 331 residues: Heat-inducible transcription repressor HrcA (331 aa).

This sequence belongs to the HrcA family.

Functionally, negative regulator of class I heat shock genes (grpE-dnaK-dnaJ and groELS operons). Prevents heat-shock induction of these operons. The chain is Heat-inducible transcription repressor HrcA from Synechococcus sp. (strain WH7803).